The sequence spans 348 residues: MAATLGPLGSWQQWRRCLSARDGSRMLLLLLLLGSGQGPQQVGAGQTFEYLKREHSLSKPYQGVGTGSSSLWNLMGNAMVMTQYIRLTPDMQSKQGALWNRVPCFLRDWELQVHFKIHGQGKKNLHGDGLAIWYTKDRMQPGPVFGNMDKFVGLGVFVDTYPNEEKQQERVFPYISAMVNNGSLSYDHERDGRPTELGGCTAIVRNLHYDTFLVIRYVKRHLTIMMDIDGKHEWRDCIEVPGVRLPRGYYFGTSSITGDLSDNHDVISLKLFELTVERTPEEEKLHRDVFLPSVDNMKLPEMTAPLPPLSGLALFLIVFFSLVFSVFAIVIGIILYNKWQEQSRKRFY.

The N-terminal stretch at 1 to 44 (MAATLGPLGSWQQWRRCLSARDGSRMLLLLLLLGSGQGPQQVGA) is a signal peptide. At 45 to 313 (GQTFEYLKRE…APLPPLSGLA (269 aa)) the chain is on the lumenal side. In terms of domain architecture, L-type lectin-like spans 49-274 (EYLKREHSLS…DVISLKLFEL (226 aa)). A carbohydrate-binding residues include S93 and D128. Positions 159, 161, and 163 each coordinate Ca(2+). Residue 161 to 163 (YPN) participates in a carbohydrate binding. N-linked (GlcNAc...) (high mannose) asparagine glycosylation occurs at N181. H188 is an a carbohydrate binding site. Residue D191 participates in Ca(2+) binding. C200 and C237 form a disulfide bridge. 258–260 (GDL) lines the a carbohydrate pocket. Residues 314–336 (LFLIVFFSLVFSVFAIVIGIILY) form a helical membrane-spanning segment. At 337 to 348 (NKWQEQSRKRFY) the chain is on the cytoplasmic side. The Endoplasmic reticulum retention signal signature appears at 344–346 (RKR).

Expressed in numerous tissues. Highest expression in skeletal muscle and kidney, intermediate levels in heart, liver and placenta, low levels in brain, thymus, spleen, small intestine and lung.

It localises to the endoplasmic reticulum membrane. It is found in the golgi apparatus membrane. Its function is as follows. May be involved in the regulation of export from the endoplasmic reticulum of a subset of glycoproteins. May function as a regulator of ERGIC-53. The chain is VIP36-like protein (LMAN2L) from Homo sapiens (Human).